The sequence spans 978 residues: MPEYLINGIPVNFPFEPYQVQRDYMARVIECLQNSSNGVLESPTGTGKTLSLLCSSLAWILHKKAQVQASQRTNVSELKEFEFEKKKMGGGGGGPKPEMDKLLDELNENSGKEGGRWGVPKIIYASRTHSQLTQAMQEMKNTSYGFMRAVILGSRDQLCIHPEVAKEEGNAVKTNLCKAKIQARACSFYSRVEACKERPEITGSTIMDIEDLVRVSTKLKACPFFMSKELIENADVLFMPYNYLLDPKARKANNLELANTIIILDEAHNVDKMCEESASMQIRSSDIALCIDDVTSIMKVMDNTVAIPEDDDAKKDFTIDDLALLKEMLLSLEKTVDEIPVMFSQGGSTQPGTYIFEIFEKANIKEGNYHIIAQLLENIIQYIATITEKNNFVRRGGGLQILAESLSIMFAGSGPQYRESIDKCYKCHIDIEEQKKVRGNTKQADGWTATKQLVPSVKANAKVINFWCFNPGFGMRQLLGRNARSIILTSGTLAPLKPLISELDIPIAVKLENPHIIDGSQVCVKIVGQGPDKESLNSSYGNRDNPKYISSLGRTILSFCPIIPGGLLVFFPSYPLLNKCQEAWQETGIWAQISRTKPIFVEPRGKDQFLNTMTEYYAKINDPDGKGAVFMAVCRGKVSEGLDFADMNGRACIITGLPFPPLKDARVILKKRYLQEVRTRENEIISGDEWYSLEAARAVNQAIGRVIRHKNDYGAILLCDNRFHNPRQKAQLSSWIQKHLNTAQHPTFGPIVRELSQFFRNAEKTLPQAKLTRSLAPLGPEPPIALVPDSTSLLVSGETKKKLDDIKNNFIKIENSNAVTAFKLSDYQHAHRSDATAASGKDFLSRLNTQVRTIDFNDMSSAGPSSQAGLVAIHKRERSNESTMVTQQKKRKVVLIPQETISLDDSLEVLEVKPERQAPEDRVELLKVIKSSIVPAQYKRFLVVLTGYRNDRDFGTMMGGMVEIFNRPELYYLLKGEI.

Positions 7–318 (NGIPVNFPFE…EDDDAKKDFT (312 aa)) constitute a Helicase ATP-binding domain. 42 to 49 (SPTGTGKT) contacts ATP. Positions 159, 177, 186, and 222 each coordinate [4Fe-4S] cluster. The DEAH box motif lies at 265 to 268 (DEAH).

Belongs to the helicase family. RAD3/XPD subfamily.

Its subcellular location is the nucleus. It catalyses the reaction ATP + H2O = ADP + phosphate + H(+). Its function is as follows. A probable ATP-dependent DNA helicase implicated in DNA repair and the maintenance of genomic stability. Acts as an anti-recombinase to counteract toxic recombination and limit crossover during meiosis. Regulates meiotic recombination and crossover homeostasis by physically dissociating strand invasion events and thereby promotes noncrossover repair by meiotic synthesis dependent strand annealing (SDSA) as well as disassembly of D loop recombination intermediates. The chain is Regulator of telomere elongation helicase 1 homolog from Culex quinquefasciatus (Southern house mosquito).